The chain runs to 2230 residues: Probable serine/threonine-protein kinase DDB_G0267686 (2230 aa).

Low complexity predominate over residues 1 to 12; sequence MEPNNNISNSNN. Disordered stretches follow at residues 1–22, 121–152, 270–352, 368–397, 430–451, 464–574, 593–620, 699–849, and 915–974; these read MEPNNNISNSNNGGSGIDGDGK, NNNSNNNNNDNNNNNNNNNNNNNNNNNIQLNN, DEKE…DKIS, PIINATDSSSNSINSSSNNSIATTPGRLSS, NGASGSNSGNVSPSGPTPILST, KNSS…NSPS, GSGSSSLGKGSSKKIKDSYSNNNNNSST, QHQQ…LLPS, and SNQI…SSNS. Positions 270–336 are enriched in basic and acidic residues; it reads DEKENKEGGQ…NENEKNHNDK (67 aa). A compositionally biased stretch (acidic residues) spans 337–346; the sequence is NDDDDDDEDN. Composition is skewed to low complexity over residues 375–388, 430–447, 473–574, 593–602, 610–619, and 699–721; these read SSSNSINSSSNNSI, NGASGSNSGNVSPSGPTP, NNNN…NSPS, GSGSSSLGKG, SYSNNNNNSS, and QHQQHQQAHQHQHQQQQQHQQQL. A compositionally biased stretch (polar residues) spans 722–731; the sequence is KSRSNTTNTP. Over residues 745-754 the composition is skewed to pro residues; that stretch reads NSPPVSPPSS. Composition is skewed to low complexity over residues 755–766 and 783–818; these read PMLSPLSSSPPS and TGSLLSGSSSNNNTTTTTTTTTSNSNSLSNNNRSNS. Residues 840-849 are compositionally biased toward polar residues; it reads YNTTPPLLPS. Residues 991-1119 form the RGS domain; it reads SLSALMKDRI…CILHSTTNGT (129 aa). Disordered stretches follow at residues 1146–1181, 1220–1243, 1300–1362, 1506–1546, 1563–1611, 1725–1771, 1802–1848, and 1905–1929; these read SKETSNSLVNNNTTPNTSTASPSITASSSSTSINNN, KLSHSNSPSPSSSPPDSYTSNQPL, LSPP…GDQT, QQQQ…QPQQ, PTIP…NNNS, VSNN…NNGN, NNLM…NNNH, and ENNTTTTTTTTSNRPFRSNNPTISQ. Composition is skewed to low complexity over residues 1149 to 1181 and 1222 to 1239; these read TSNSLVNNNTTPNTSTASPSITASSSSTSINNN and SHSNSPSPSSSPPDSYTS. A compositionally biased stretch (polar residues) spans 1324–1353; it reads TNGSMKSSLFQQQLQPTGSINSSPINNHQV. Low complexity-rich tracts occupy residues 1506-1520 and 1530-1546; these read QQQQQQHQQHQQFQP and PSSNSIIQPSQQQQPQQ. The segment covering 1726-1769 has biased composition (low complexity); the sequence is SNNNNINSNNNNNNNNNNNNNNNNNNNNNNNNNNNNNNNSNNNN. Positions 1905-1915 are enriched in low complexity; it reads ENNTTTTTTTT. Residues 1916 to 1929 are compositionally biased toward polar residues; that stretch reads SNRPFRSNNPTISQ. One can recognise a Protein kinase domain in the interval 1949-2208; that stretch reads IVFLNKLGEG…SCPEILDSLL (260 aa). Residues 1955–1963 and K1976 contribute to the ATP site; that span reads LGEGTSAKV. The active-site Proton acceptor is the D2069.

This sequence belongs to the protein kinase superfamily. TKL Ser/Thr protein kinase family.

The catalysed reaction is L-seryl-[protein] + ATP = O-phospho-L-seryl-[protein] + ADP + H(+). It catalyses the reaction L-threonyl-[protein] + ATP = O-phospho-L-threonyl-[protein] + ADP + H(+). This is Probable serine/threonine-protein kinase DDB_G0267686 from Dictyostelium discoideum (Social amoeba).